The following is a 434-amino-acid chain: D-amino acid dehydrogenase (434 aa).

Val-3 to Trp-17 is an FAD binding site.

The protein belongs to the DadA oxidoreductase family. Requires FAD as cofactor.

It catalyses the reaction a D-alpha-amino acid + A + H2O = a 2-oxocarboxylate + AH2 + NH4(+). It functions in the pathway amino-acid degradation; D-alanine degradation; NH(3) and pyruvate from D-alanine: step 1/1. Its function is as follows. Oxidative deamination of D-amino acids. This chain is D-amino acid dehydrogenase, found in Stenotrophomonas maltophilia (strain K279a).